A 20-amino-acid chain; its full sequence is Glutathione S-transferase 2 (20 aa).

Residues 1-20 (GYKVTYFAIRGLAEPIXLLL) form the GST N-terminal domain. Tyrosine 6 serves as a coordination point for glutathione.

The protein belongs to the GST superfamily. Sigma family.

It catalyses the reaction RX + glutathione = an S-substituted glutathione + a halide anion + H(+). Functionally, conjugation of reduced glutathione to a wide number of exogenous and endogenous hydrophobic electrophiles. This chain is Glutathione S-transferase 2 (GST2), found in Ascaris suum (Pig roundworm).